The primary structure comprises 439 residues: uncharacterized protein (439 aa).

The signal sequence occupies residues 1–22 (MWVALKRFGFLSGLLALTVLSA). A lipid anchor (N-palmitoyl cysteine) is attached at Cys23. A lipid anchor (S-diacylglycerol cysteine) is attached at Cys23.

The protein belongs to the MG067/MG068/MG395 family.

The protein localises to the cell membrane. This is an uncharacterized protein from Mycoplasma pneumoniae (strain ATCC 29342 / M129 / Subtype 1) (Mycoplasmoides pneumoniae).